The sequence spans 352 residues: Ion-translocating oxidoreductase complex subunit D (352 aa).

5 consecutive transmembrane segments (helical) span residues 20 to 40, 42 to 62, 78 to 109, 123 to 143, and 148 to 168; these read IMLL…WFFG, GTLV…ALVL, ALLT…VIIA, PAMI…TSWL, and IAVN…GHTA. T187 carries the FMN phosphoryl threonine modification. The next 5 membrane-spanning stretches (helical) occupy residues 214-234, 242-262, 267-287, 301-321, and 322-342; these read ILAG…GVWL, WHIP…GWLF, LAAP…FFIL, LIFG…GGYP, and DGVA…DYYT.

Belongs to the NqrB/RnfD family. As to quaternary structure, the complex is composed of six subunits: RsxA, RsxB, RsxC, RsxD, RsxE and RsxG. Requires FMN as cofactor.

The protein localises to the cell inner membrane. Functionally, part of a membrane-bound complex that couples electron transfer with translocation of ions across the membrane. Required to maintain the reduced state of SoxR. In Shigella dysenteriae serotype 1 (strain Sd197), this protein is Ion-translocating oxidoreductase complex subunit D.